The primary structure comprises 241 residues: DNA repair protein RecO (241 aa).

This sequence belongs to the RecO family.

Involved in DNA repair and RecF pathway recombination. This Orientia tsutsugamushi (strain Boryong) (Rickettsia tsutsugamushi) protein is DNA repair protein RecO.